We begin with the raw amino-acid sequence, 459 residues long: Bifunctional protein GlmU (459 aa).

The interval 1–230 (MSNRFAVILA…FDETLGVNDR (230 aa)) is pyrophosphorylase. UDP-N-acetyl-alpha-D-glucosamine-binding positions include 9–12 (LAAG), Lys-23, Gln-73, and 78–79 (GT). Asp-103 lines the Mg(2+) pocket. The UDP-N-acetyl-alpha-D-glucosamine site is built by Gly-140, Glu-155, Asn-170, and Asn-228. A Mg(2+)-binding site is contributed by Asn-228. Positions 231–251 (VALSQAEIIMKNRINRKNMVN) are linker. Residues 252–459 (GVTIIDPSNT…VDQLLNKKKS (208 aa)) are N-acetyltransferase. UDP-N-acetyl-alpha-D-glucosamine-binding residues include Arg-333 and Lys-351. The active-site Proton acceptor is His-363. UDP-N-acetyl-alpha-D-glucosamine contacts are provided by Tyr-366 and Asn-377. Residues 386–387 (NY), Ala-423, and Arg-440 each bind acetyl-CoA.

The protein in the N-terminal section; belongs to the N-acetylglucosamine-1-phosphate uridyltransferase family. It in the C-terminal section; belongs to the transferase hexapeptide repeat family. As to quaternary structure, homotrimer. The cofactor is Mg(2+).

The protein localises to the cytoplasm. It catalyses the reaction alpha-D-glucosamine 1-phosphate + acetyl-CoA = N-acetyl-alpha-D-glucosamine 1-phosphate + CoA + H(+). It carries out the reaction N-acetyl-alpha-D-glucosamine 1-phosphate + UTP + H(+) = UDP-N-acetyl-alpha-D-glucosamine + diphosphate. The protein operates within nucleotide-sugar biosynthesis; UDP-N-acetyl-alpha-D-glucosamine biosynthesis; N-acetyl-alpha-D-glucosamine 1-phosphate from alpha-D-glucosamine 6-phosphate (route II): step 2/2. Its pathway is nucleotide-sugar biosynthesis; UDP-N-acetyl-alpha-D-glucosamine biosynthesis; UDP-N-acetyl-alpha-D-glucosamine from N-acetyl-alpha-D-glucosamine 1-phosphate: step 1/1. It functions in the pathway bacterial outer membrane biogenesis; LPS lipid A biosynthesis. Functionally, catalyzes the last two sequential reactions in the de novo biosynthetic pathway for UDP-N-acetylglucosamine (UDP-GlcNAc). The C-terminal domain catalyzes the transfer of acetyl group from acetyl coenzyme A to glucosamine-1-phosphate (GlcN-1-P) to produce N-acetylglucosamine-1-phosphate (GlcNAc-1-P), which is converted into UDP-GlcNAc by the transfer of uridine 5-monophosphate (from uridine 5-triphosphate), a reaction catalyzed by the N-terminal domain. This chain is Bifunctional protein GlmU, found in Bacillus cereus (strain AH187).